Reading from the N-terminus, the 432-residue chain is Glutamate-1-semialdehyde 2,1-aminomutase 1 (432 aa).

The residue at position 272 (Lys-272) is an N6-(pyridoxal phosphate)lysine.

It belongs to the class-III pyridoxal-phosphate-dependent aminotransferase family. HemL subfamily. Homodimer. Pyridoxal 5'-phosphate serves as cofactor.

The protein resides in the cytoplasm. It carries out the reaction (S)-4-amino-5-oxopentanoate = 5-aminolevulinate. It functions in the pathway porphyrin-containing compound metabolism; protoporphyrin-IX biosynthesis; 5-aminolevulinate from L-glutamyl-tRNA(Glu): step 2/2. This is Glutamate-1-semialdehyde 2,1-aminomutase 1 from Exiguobacterium sp. (strain ATCC BAA-1283 / AT1b).